The primary structure comprises 505 residues: Prenylcysteine oxidase 1 (505 aa).

The first 27 residues, 1–27 (MGRVVAELVSSLLGLWLLLCSCGCPEG), serve as a signal peptide directing secretion. N-linked (GlcNAc...) asparagine glycans are attached at residues Asn-196, Asn-323, and Asn-353.

Belongs to the prenylcysteine oxidase family. It depends on FAD as a cofactor. In terms of tissue distribution, widely expressed.

The protein localises to the lysosome. The enzyme catalyses an S-polyprenyl-L-cysteine + O2 + H2O = a polyprenal + L-cysteine + H2O2. It carries out the reaction S-(2E,6E)-farnesyl-L-cysteine + O2 + H2O = (2E,6E)-farnesal + L-cysteine + H2O2. The catalysed reaction is [(2E,6E,10E)-geranylgeranyl]-L-cysteine + O2 + H2O = (2E,6E,10E)-geranylgeranial + L-cysteine + H2O2. Functionally, prenylcysteine oxidase that cleaves the thioether bond of prenyl-L-cysteines, such as farnesylcysteine and geranylgeranylcysteine. Only active against free prenylcysteines and not prenylcysteine residues within prenylated proteins or peptides. Involved in the final step in the degradation of prenylated proteins, by degrading prenylcysteines after the protein has been degraded. This is Prenylcysteine oxidase 1 from Homo sapiens (Human).